A 145-amino-acid polypeptide reads, in one-letter code: Large ribosomal subunit protein uL13 (145 aa).

The protein belongs to the universal ribosomal protein uL13 family. As to quaternary structure, part of the 50S ribosomal subunit.

In terms of biological role, this protein is one of the early assembly proteins of the 50S ribosomal subunit, although it is not seen to bind rRNA by itself. It is important during the early stages of 50S assembly. The chain is Large ribosomal subunit protein uL13 from Geobacillus kaustophilus (strain HTA426).